The chain runs to 242 residues: Uridylate kinase (242 aa).

ATP is bound at residue 16–19 (KVSG). Position 58 (Gly-58) interacts with UMP. Residues Gly-59 and Arg-63 each coordinate ATP. UMP is bound by residues Asp-78 and 139–146 (TGNPFCTT). The ATP site is built by Thr-166, Gln-167, Tyr-172, and Asp-175.

Belongs to the UMP kinase family. In terms of assembly, homohexamer.

It localises to the cytoplasm. It catalyses the reaction UMP + ATP = UDP + ADP. It functions in the pathway pyrimidine metabolism; CTP biosynthesis via de novo pathway; UDP from UMP (UMPK route): step 1/1. With respect to regulation, inhibited by UTP. Catalyzes the reversible phosphorylation of UMP to UDP. The protein is Uridylate kinase of Rickettsia felis (strain ATCC VR-1525 / URRWXCal2) (Rickettsia azadi).